The primary structure comprises 1032 residues: Calmodulin-binding transcription activator 3 (1032 aa).

A DNA-binding region (CG-1) is located at residues 15 to 141 (VGQILSEARH…YLEVKGSRVS (127 aa)). The disordered stretch occupies residues 146–197 (RMQRTEDAARSPQETGDALTSEHDGYASCSFNQNDHSNHSQTTDSASVNGFH). The span at 174–195 (CSFNQNDHSNHSQTTDSASVNG) shows a compositional bias: polar residues. Ser272 bears the Phosphoserine mark. 3 ANK repeats span residues 661–690 (GGQGVLHFAASLGYNWALEPTIIAGVSVDF), 694–723 (NGWTALHWAAFFGRERIIGSLIALGAAPGT), and 733–762 (SGSTPSDLAYANGHKGIAGYLSEYALRAHV). IQ domains follow at residues 852–881 (VQAAAIRIQNKFRGYKGRKDYLITRQRIIK) and 875–904 (TRQRIIKIQAHVRGYQFRKNYRKIIWSVGV). The calmodulin-binding stretch occupies residues 900–922 (WSVGVLEKVILRWRRKGAGLRGF). Positions 945 to 987 (KQGRKQTEDRLQKALARVKSMVQYPEARDQYRRLLNVVNDIQE) form a coiled coil. Residue Ser964 is modified to Phosphoserine.

The protein belongs to the CAMTA family. Interacts with SR1IP1. Interacts with DSC1. Ubiquinated during pathogen infection. Ubiquitination leads to its subsequent proteasome-dependent degradation, thus allowing the establishment of plant defense response. In terms of tissue distribution, expressed in roots, stems, leaves, carpels, and siliques, but not in stigmas or other parts of the flower.

The protein resides in the nucleus. Transcription activator that binds to the DNA consensus sequence 5'-[ACG]CGCG[GTC]-3'. Binds calmodulin in a calcium-dependent manner in vitro. Regulates transcriptional activity in response to calcium signals. Involved in freezing tolerance in association with CAMTA1 and CAMTA2. Required for the cold-induced expression of DREB1B/CBF1, DREB1C/CBF2, ZAT12 and GOLS3. Involved in response to cold. Contributes together with CAMTA5 to the positive regulation of the cold-induced expression of DREB1A/CBF3, DREB1B/CBF1 and DREB1C/CBF2. Involved together with CAMTA2 and CAMTA4 in the positive regulation of a general stress response (GSR). Involved in the regulation of GSR amplitude downstream of MEKK1. Involved in the regulation of a set of genes involved in defense responses against pathogens. Involved in the regulation of both basal resistance and systemic acquired resistance (SAR). Acts as negative regulator of plant immunity. Binds to the promoter of the defense-related gene EDS1 and represses its expression. Binds to the promoter of the defense-related gene NDR1 and represses its expression. Involved in defense against insects. Required for tolerance to the generalist herbivore Trichoplusia ni, and contributes to the positive regulation of genes associated with glucosinolate metabolism. Required for tolerance to Bradysia impatiens larvae. Mediates herbivore-induced wound response. Required for wound-induced jasmonate accumulation. Involved in the regulation of ethylene-induced senescence by binding to the promoter of the senescence-inducer gene EIN3 and repressing its expression. In Arabidopsis thaliana (Mouse-ear cress), this protein is Calmodulin-binding transcription activator 3.